The chain runs to 78 residues: Large ribosomal subunit protein bL28 (78 aa).

Residues 1-22 form a disordered region; sequence MAKVCQVTGKRPVTGHNVSHAK.

This sequence belongs to the bacterial ribosomal protein bL28 family.

In Teredinibacter turnerae (strain ATCC 39867 / T7901), this protein is Large ribosomal subunit protein bL28.